Reading from the N-terminus, the 686-residue chain is Calponin homology and LIM domain-containing protein (686 aa).

In terms of domain architecture, Calponin-homology (CH) spans 15-120; the sequence is ELALDESRDW…ITLYWLGRAA (106 aa). 2 LIM zinc-binding domains span residues 139-200 and 219-279; these read MNCS…ATNL and NKCS…SCGK. Positions 305-314 are enriched in basic and acidic residues; the sequence is KQVMDKDGHD. The interval 305-345 is disordered; sequence KQVMDKDGHDHHHHNHNKPTTTTTTTNSNSPLAKKKSDSCK. A compositionally biased stretch (low complexity) spans 322 to 333; it reads KPTTTTTTTNSN. 4 consecutive LIM zinc-binding domains span residues 373–435, 437–495, 519–579, and 583–658; these read GTCG…NNKS, KNCH…LNQY, DRCV…IQQS, and DHCA…ASSS.

Interacts with limF and rab21.

Involved in the regulation of phagocytosis. May repress rab21. The polypeptide is Calponin homology and LIM domain-containing protein (ChLim) (Dictyostelium discoideum (Social amoeba)).